The primary structure comprises 553 residues: MLSVRVAAAVARALPRRAGLVSKNALGSSFIAARNLHASNSRLQKTGTAEVSSILEERILGADTSVDLEETGRVLSIGDGIARVHGLRNVQAEEMVEFSSGLKGMSLNLEPDNVGVVVFGNDKLIKEGDIVKRTGAIVDVPVGEELLGRVVDALGNAIDGKGPIGSKARRRVGLKAPGIIPRISVREPMQTGIKAVDSLVPIGRGQRELIIGDRQTGKTSIAIDTIINQKRFNDGTDEKKKLYCIYVAIGQKRSTVAQLVKRLTDADAMKYTIVVSATASDAAPLQYLAPYSGCSMGEYFRDNGKHALIIYDDLSKQAVAYRQMSLLLRRPPGREAYPGDVFYLHSRLLERAAKMNDAFGGGSLTALPVIETQAGDVSAYIPTNVISITDGQIFLETELFYKGIRPAINVGLSVSRVGSAAQTRAMKQVAGTMKLELAQYREVAAFAQFGSDLDAATQQLLSRGVRLTELLKQGQYSPMAIEEQVAVIYAGVRGYLDKLEPSKITKFENAFLSHVISQHQALLSKIRTDGKISEESDAKLKEIVTNFLAGFEA.

The N-terminal 43 residues, 1-43, are a transit peptide targeting the mitochondrion; that stretch reads MLSVRVAAAVARALPRRAGLVSKNALGSSFIAARNLHASNSRL. Gln-44 bears the Pyrrolidone carboxylic acid mark. Phosphoserine is present on residues Ser-53 and Ser-65. At Ser-76 the chain carries Phosphoserine; alternate. Ser-76 carries O-linked (GlcNAc) serine; alternate glycosylation. Ser-106 carries the post-translational modification Phosphoserine. Lys-123, Lys-126, and Lys-132 each carry N6-acetyllysine. Thr-134 carries the phosphothreonine modification. Position 161 is an N6-acetyllysine; alternate (Lys-161). Lys-161 is subject to N6-succinyllysine; alternate. Ser-166 carries the post-translational modification Phosphoserine. The residue at position 167 (Lys-167) is an N6-acetyllysine; alternate. The residue at position 167 (Lys-167) is an N6-succinyllysine; alternate. Ser-184 is subject to Phosphoserine. Arg-204 bears the Omega-N-methylarginine mark. ATP-binding residues include Gln-215, Gly-217, Lys-218, Thr-219, and Ser-220. Thr-219 provides a ligand contact to Mg(2+). 2 positions are modified to N6-acetyllysine; alternate: Lys-230 and Lys-239. N6-succinyllysine; alternate is present on residues Lys-230 and Lys-239. An N6-acetyllysine modification is found at Lys-240. Residues Lys-261 and Lys-305 each carry the N6-acetyllysine; alternate modification. An N6-succinyllysine; alternate mark is found at Lys-261 and Lys-305. Mg(2+) is bound at residue Asp-312. N6-acetyllysine; alternate is present on Lys-427. Position 427 is an N6-succinyllysine; alternate (Lys-427). Residue Lys-434 is modified to N6-acetyllysine. ATP-binding residues include Gln-473 and Gln-475. N6-acetyllysine; alternate occurs at positions 498, 506, 531, and 539. An N6-succinyllysine; alternate mark is found at Lys-498, Lys-506, Lys-531, and Lys-539. At Lys-541 the chain carries N6-acetyllysine.

This sequence belongs to the ATPase alpha/beta chains family. As to quaternary structure, homotrimer. Component of the ATP synthase complex composed at least of ATP5F1A/subunit alpha, ATP5F1B/subunit beta, ATP5MC1/subunit c (homooctomer), MT-ATP6/subunit a, MT-ATP8/subunit 8, ATP5ME/subunit e, ATP5MF/subunit f, ATP5MG/subunit g, ATP5MK/subunit k, ATP5MJ/subunit j, ATP5F1C/subunit gamma, ATP5F1D/subunit delta, ATP5F1E/subunit epsilon, ATP5PF/subunit F6, ATP5PB/subunit b, ATP5PD/subunit d, ATP5PO/subunit OSCP. ATP synthase complex consists of a soluble F(1) head domain (subunits alpha(3) and beta(3)) - the catalytic core - and a membrane F(0) domain - the membrane proton channel (subunits c, a, 8, e, f, g, k and j). These two domains are linked by a central stalk (subunits gamma, delta, and epsilon) rotating inside the F1 region and a stationary peripheral stalk (subunits F6, b, d, and OSCP). Interacts with ATPAF2. Interacts with HRG; the interaction occurs on the surface of T-cells and alters the cell morphology when associated with concanavalin (in vitro). Interacts with PLG (angiostatin peptide); the interaction inhibits most of the angiogenic properties of angiostatin. Interacts with BLOC1S1. Interacts with BCL2L1 isoform BCL-X(L); the interaction mediates the association of BCL2L1 isoform BCL-X(L) with the mitochondrial membrane F(1)F(0) ATP synthase and enhances neurons metabolic efficiency. Interacts with CLN5 and PPT1. Interacts with S100A1; this interaction increases F1-ATPase activity. Interacts with ABCB7; this interaction allows the regulation of cellular iron homeostasis and cellular reactive oxygen species (ROS) levels in cardiomyocytes. In terms of processing, acetylated on lysine residues. BLOC1S1 is required for acetylation. Heart muscle (at protein level). Heart and liver.

The protein resides in the mitochondrion inner membrane. The protein localises to the cell membrane. In terms of biological role, subunit alpha, of the mitochondrial membrane ATP synthase complex (F(1)F(0) ATP synthase or Complex V) that produces ATP from ADP in the presence of a proton gradient across the membrane which is generated by electron transport complexes of the respiratory chain. ATP synthase complex consist of a soluble F(1) head domain - the catalytic core - and a membrane F(1) domain - the membrane proton channel. These two domains are linked by a central stalk rotating inside the F(1) region and a stationary peripheral stalk. During catalysis, ATP synthesis in the catalytic domain of F(1) is coupled via a rotary mechanism of the central stalk subunits to proton translocation. In vivo, can only synthesize ATP although its ATP hydrolase activity can be activated artificially in vitro. With the catalytic subunit beta (ATP5F1B), forms the catalytic core in the F(1) domain. Subunit alpha does not bear the catalytic high-affinity ATP-binding sites. The polypeptide is ATP synthase F(1) complex subunit alpha, mitochondrial (Bos taurus (Bovine)).